The primary structure comprises 361 residues: Spermatogenesis-associated protein 17 (361 aa).

3 IQ domains span residues 32 to 61 (ENDAAVKIQSWFRGCQVRAYIRHLNRIVTI), 55 to 84 (LNRIVTIIQKWWRSFLGRKQYQLTVQVAYY), and 91 to 120 (YNAMAVRIQRRWRGYRVRKYLFNYYYLKEY).

It localises to the cytoplasm. This is Spermatogenesis-associated protein 17 (SPATA17) from Homo sapiens (Human).